The sequence spans 144 residues: Giant hemoglobins B chain (144 aa).

The Globin domain maps to 3 to 144 (VCGPLQRLKV…LNVITNGIQG (142 aa)). H96 contributes to the heme b binding site.

This sequence belongs to the globin family. In terms of assembly, part of giant hemoglobin C1, V1 and V2. This worm has three different extracellular Hbs: two dissolved in the vascular blood, V1 (CA. 3,500 kDa) and V2 (CA. 400 kDa), and one in the coelomic fluid, C1 (CA. 400 kDa). V1 consists of four heme-containing, globin chains (B-E) and four linker chains (L1-L4). V2 consists of six globin chains (A-F) and C1 consists of five globin chains (A-E).

Its subcellular location is the secreted. The protein resides in the extracellular space. The sequence is that of Giant hemoglobins B chain from Riftia pachyptila (Vent tube worm).